The chain runs to 572 residues: Glutamate--tRNA ligase (572 aa).

The short motif at 107–117 (PNPDGAFHLGN) is the 'HIGH' region element.

Belongs to the class-I aminoacyl-tRNA synthetase family. Glutamate--tRNA ligase type 2 subfamily.

Its subcellular location is the cytoplasm. It catalyses the reaction tRNA(Glu) + L-glutamate + ATP = L-glutamyl-tRNA(Glu) + AMP + diphosphate. In terms of biological role, catalyzes the attachment of glutamate to tRNA(Glu) in a two-step reaction: glutamate is first activated by ATP to form Glu-AMP and then transferred to the acceptor end of tRNA(Glu). This Pyrococcus furiosus (strain ATCC 43587 / DSM 3638 / JCM 8422 / Vc1) protein is Glutamate--tRNA ligase.